A 265-amino-acid chain; its full sequence is Shikimate dehydrogenase (NADP(+)) (265 aa).

Shikimate contacts are provided by residues serine 15–serine 17 and threonine 62. Lysine 66 serves as the catalytic Proton acceptor. Positions 87 and 102 each coordinate shikimate. NADP(+) contacts are provided by residues glycine 127–alanine 131, asparagine 151–arginine 156, and methionine 212. Tyrosine 214 is a binding site for shikimate. Glycine 234 lines the NADP(+) pocket.

It belongs to the shikimate dehydrogenase family. As to quaternary structure, homodimer.

The enzyme catalyses shikimate + NADP(+) = 3-dehydroshikimate + NADPH + H(+). Its pathway is metabolic intermediate biosynthesis; chorismate biosynthesis; chorismate from D-erythrose 4-phosphate and phosphoenolpyruvate: step 4/7. Its function is as follows. Involved in the biosynthesis of the chorismate, which leads to the biosynthesis of aromatic amino acids. Catalyzes the reversible NADPH linked reduction of 3-dehydroshikimate (DHSA) to yield shikimate (SA). The sequence is that of Shikimate dehydrogenase (NADP(+)) from Thiobacillus denitrificans (strain ATCC 25259 / T1).